The chain runs to 397 residues: Lysophospholipid transporter LplT (397 aa).

Over 1–17 the chain is Periplasmic; that stretch reads MSESVHTNTSLWSKGMK. Residues 18 to 38 traverse the membrane as a helical segment; the sequence is AVIVAQFLSAFGDNALLFATL. Residues 39 to 52 lie on the Cytoplasmic side of the membrane; that stretch reads ALLKAQFYPEWSQP. A helical membrane pass occupies residues 53–73; sequence ILQMVFVGAYILFAPFVGQVA. Residues 74-90 lie on the Periplasmic side of the membrane; the sequence is DSFAKGRVMMFANGLKL. The chain crosses the membrane as a helical span at residues 91–111; the sequence is LGAASICFGINPFLGYTLVGV. At 112-144 the chain is on the cytoplasmic side; sequence GAAAYSPAKYGILGELTTGSKLVKANGLMEAST. A helical transmembrane segment spans residues 145-165; sequence IAAILLGSVAGGVLADWHVLV. Position 166 (Ala166) is a topological domain, periplasmic. The chain crosses the membrane as a helical span at residues 167 to 187; it reads LAACALAYGGAVVANIYIPKL. Residues 188 to 226 lie on the Cytoplasmic side of the membrane; the sequence is AAARPGQSWNLINMTRSFLNACTSLWRNGETRFSLVGTS. A helical transmembrane segment spans residues 227-247; the sequence is LFWGAGVTLRFLLVLWVPVAL. The Periplasmic portion of the chain corresponds to 248-256; it reads GITDNATPT. A helical transmembrane segment spans residues 257 to 277; the sequence is YLNAMVAIGIVVGAGAAAKLV. At 278–280 the chain is on the cytoplasmic side; that stretch reads TLE. The helical transmembrane segment at 281 to 301 threads the bilayer; the sequence is TVSRCMPAGILIGVVVLIFSL. Residues 302–304 are Periplasmic-facing; sequence QHE. The helical transmembrane segment at 305–325 threads the bilayer; it reads LLPAYALLMLIGVMGGFFVVP. At 326–343 the chain is on the cytoplasmic side; it reads LNALLQERGKKSVGAGNA. Residues 344 to 364 form a helical membrane-spanning segment; sequence IAVQNLGENSAMLLMLGIYSL. Residues 365-366 lie on the Periplasmic side of the membrane; it reads AV. Residues 367 to 387 form a helical membrane-spanning segment; that stretch reads MVGIPVVPIGIGFGALFALAI. Over 388–397 the chain is Cytoplasmic; it reads TALWIWQRRH.

The protein belongs to the major facilitator superfamily. LplT (TC 2.A.1.42) family.

The protein localises to the cell inner membrane. Functionally, catalyzes the facilitated diffusion of 2-acyl-glycero-3-phosphoethanolamine (2-acyl-GPE) into the cell. The polypeptide is Lysophospholipid transporter LplT (Escherichia coli (strain ATCC 8739 / DSM 1576 / NBRC 3972 / NCIMB 8545 / WDCM 00012 / Crooks)).